Consider the following 482-residue polypeptide: Programmed cell death protein 7 (482 aa).

Disordered stretches follow at residues 1–136 and 151–170; these read MALP…GDAA and GNPR…GPSL. Positions 13–48 are enriched in pro residues; that stretch reads GPPPPQPPPSAPFGCPPPPLPSPAFPPPLPQRPGPF. Low complexity predominate over residues 49-71; the sequence is PGASAPFLQPPLALQPRAPAEAS. Composition is skewed to pro residues over residues 82-100 and 109-130; these read PVPP…PFPG and PPPP…PPPD. A compositionally biased stretch (low complexity) spans 151–168; that stretch reads GNPRRPGGLRTPRTPAGP. The stretch at 233–408 forms a coiled coil; it reads EARRRLERVR…LQKREIESKL (176 aa).

Interacts with RBM40. Component of the U11/U12 snRNPs that are part of the U12-type spliceosome. In terms of tissue distribution, highly expressed in testis, thymus and lymph nodes. Detected at low levels in embryonic stem cells.

It is found in the nucleus. Functionally, promotes apoptosis when overexpressed. The sequence is that of Programmed cell death protein 7 (Pdcd7) from Mus musculus (Mouse).